A 248-amino-acid polypeptide reads, in one-letter code: tRNA pseudouridine synthase A (248 aa).

Asp-53 (nucleophile) is an active-site residue. Tyr-111 contacts substrate.

It belongs to the tRNA pseudouridine synthase TruA family. In terms of assembly, homodimer.

It catalyses the reaction uridine(38/39/40) in tRNA = pseudouridine(38/39/40) in tRNA. Its function is as follows. Formation of pseudouridine at positions 38, 39 and 40 in the anticodon stem and loop of transfer RNAs. The sequence is that of tRNA pseudouridine synthase A from Listeria monocytogenes serovar 1/2a (strain ATCC BAA-679 / EGD-e).